The chain runs to 255 residues: Hydroxyacylglutathione hydrolase (255 aa).

The Zn(2+) site is built by His-52, His-54, Asp-56, His-57, His-108, Asp-130, and His-168.

It belongs to the metallo-beta-lactamase superfamily. Glyoxalase II family. In terms of assembly, monomer. Zn(2+) is required as a cofactor.

The enzyme catalyses an S-(2-hydroxyacyl)glutathione + H2O = a 2-hydroxy carboxylate + glutathione + H(+). Its pathway is secondary metabolite metabolism; methylglyoxal degradation; (R)-lactate from methylglyoxal: step 2/2. Functionally, thiolesterase that catalyzes the hydrolysis of S-D-lactoyl-glutathione to form glutathione and D-lactic acid. The protein is Hydroxyacylglutathione hydrolase of Albidiferax ferrireducens (strain ATCC BAA-621 / DSM 15236 / T118) (Rhodoferax ferrireducens).